Here is a 154-residue protein sequence, read N- to C-terminus: Immunity protein YwqK (154 aa).

As to quaternary structure, probably interacts with cognate toxin YwqJ but not with other non-cognate LXG toxins. The interaction inhibits the toxic activity of YwqJ.

The protein resides in the cytoplasm. In terms of biological role, immunity component of one of 6 LXG toxin-immunity modules in this strain. They promote kin selection, mediate competition in biofilms, and drive spatial segregation of different strains, indicating that LXG toxins may help avoid warfare between strains in biofilms. Mediates intercellular competition during biofilm formation; disruption of the operon disadvantages the bacteria, but overexpression of the cognate immunity protein restores growth in competition with wild-type. In situ neutralizes the toxic effect of cognate toxin YqcG. Probably neutralizes the ability to inhibit growth of cognate toxin YwqJ. Probably does not have immunity protein activity on other LXG toxins. This chain is Immunity protein YwqK (ywqK), found in Bacillus subtilis (strain 168).